Reading from the N-terminus, the 580-residue chain is Probable mediator of RNA polymerase II transcription subunit 26a (580 aa).

The region spanning 108-183 is the TFIIS N-terminal domain; the sequence is DEVMRIRDIL…AEWKRLVDQW (76 aa). Basic and acidic residues-rich tracts occupy residues 244–255, 280–290, and 299–309; these read RHSVESKHERKS, QTRREEADVRP, and VEPKRQTKQSR. Positions 244–337 are disordered; the sequence is RHSVESKHER…RKLAGPQQDK (94 aa). Residues 347-368 adopt a coiled-coil conformation; that stretch reads FEFAKRKLQESYHQHENAKRQR.

Belongs to the Mediator complex subunit 26 family. Component of the Mediator complex.

The protein localises to the nucleus. Component of the Mediator complex, a coactivator involved in the regulated transcription of nearly all RNA polymerase II-dependent genes. Mediator functions as a bridge to convey information from gene-specific regulatory proteins to the basal RNA polymerase II transcription machinery. The Mediator complex, having a compact conformation in its free form, is recruited to promoters by direct interactions with regulatory proteins and serves for the assembly of a functional preinitiation complex with RNA polymerase II and the general transcription factors. May play a role in transcription elongation. In Arabidopsis thaliana (Mouse-ear cress), this protein is Probable mediator of RNA polymerase II transcription subunit 26a (MED26A).